The following is a 591-amino-acid chain: DEAD-box ATP-dependent RNA helicase 30 (591 aa).

The tract at residues 1–109 (MSSYDRRFAD…GRGGSSKREL (109 aa)) is disordered. Residues 72 to 103 (FSVGRGGGRGGYGQYGDRNGGGNWGGGGGRGG) show a composition bias toward gly residues. The Q motif motif lies at 165-193 (KMFQDANFPDNILEAIAKLGFTEPTPIQA). The Helicase ATP-binding domain maps to 196–371 (WPMALKGRDL…RQFLRDPYKA (176 aa)). 209-216 (AETGSGKT) provides a ligand contact to ATP. Positions 319–322 (DEAD) match the DEAD box motif. The Helicase C-terminal domain maps to 399-544 (RLLTLLKQLM…VVPPTLSALV (146 aa)). Residues 547 to 591 (SGSGYGGSGGGRNFRPRGGGRGGGFGDKRSRSTSNFVPHGGKRTW) are disordered. A compositionally biased stretch (gly residues) spans 549–571 (SGYGGSGGGRNFRPRGGGRGGGF).

Belongs to the DEAD box helicase family. DDX5/DBP2 subfamily.

The protein resides in the nucleus. It catalyses the reaction ATP + H2O = ADP + phosphate + H(+). ATP-dependent RNA helicase involved nonsense-mediated mRNA decay and ribosome biogenesis through rRNA processing. This chain is DEAD-box ATP-dependent RNA helicase 30 (RH30), found in Arabidopsis thaliana (Mouse-ear cress).